The following is a 437-amino-acid chain: Glutamate-1-semialdehyde 2,1-aminomutase (437 aa).

Lys-273 is modified (N6-(pyridoxal phosphate)lysine).

Belongs to the class-III pyridoxal-phosphate-dependent aminotransferase family. HemL subfamily. Homodimer. It depends on pyridoxal 5'-phosphate as a cofactor.

The protein resides in the cytoplasm. It carries out the reaction (S)-4-amino-5-oxopentanoate = 5-aminolevulinate. The protein operates within porphyrin-containing compound metabolism; protoporphyrin-IX biosynthesis; 5-aminolevulinate from L-glutamyl-tRNA(Glu): step 2/2. This is Glutamate-1-semialdehyde 2,1-aminomutase from Chlamydia felis (strain Fe/C-56) (Chlamydophila felis).